A 683-amino-acid chain; its full sequence is DNA ligase (683 aa).

NAD(+)-binding positions include 35-39, 81-82, and E112; these read DAEYD and SL. Residue K114 is the N6-AMP-lysine intermediate of the active site. NAD(+)-binding residues include R135, E170, K277, and K301. The Zn(2+) site is built by C395, C398, C411, and C417. A BRCT domain is found at 601-683; it reads SSNSVLNNKV…YRMINSEVSE (83 aa).

It belongs to the NAD-dependent DNA ligase family. LigA subfamily. Mg(2+) is required as a cofactor. It depends on Mn(2+) as a cofactor.

The enzyme catalyses NAD(+) + (deoxyribonucleotide)n-3'-hydroxyl + 5'-phospho-(deoxyribonucleotide)m = (deoxyribonucleotide)n+m + AMP + beta-nicotinamide D-nucleotide.. Functionally, DNA ligase that catalyzes the formation of phosphodiester linkages between 5'-phosphoryl and 3'-hydroxyl groups in double-stranded DNA using NAD as a coenzyme and as the energy source for the reaction. It is essential for DNA replication and repair of damaged DNA. In Wolbachia sp. subsp. Brugia malayi (strain TRS), this protein is DNA ligase.